The following is a 252-amino-acid chain: Curing of [URE3] protein 1 (252 aa).

It localises to the nucleus. In terms of biological role, involved in the curing of prion [URE3]. Nuclear localization of this protein may suggest a role in transcription regulation, so it might exert an effect on [URE3] through known prion-curing chaperones or BTN2. In Saccharomyces cerevisiae (strain ATCC 204508 / S288c) (Baker's yeast), this protein is Curing of [URE3] protein 1 (CUR1).